The chain runs to 239 residues: SKA complex subunit 1 (239 aa).

The tract at residues 87–115 (PDSVPQKSTRPCLDDEKEGSSVVQPPESG) is disordered. A microtubule binding region spans residues 116-239 (NRHVQLISEQ…RCGPLTFYYA (124 aa)).

This sequence belongs to the SKA1 family. In terms of assembly, component of the SKA complex, composed of two copies of ska-1 and a single copy of ska-3. The core complex associates with microtubules and may form dimeric assemblies. Interacts with ska-3 and microtubules.

The protein resides in the cytoplasm. The protein localises to the cytoskeleton. It localises to the spindle. Its subcellular location is the chromosome. It is found in the centromere. The protein resides in the kinetochore. Its function is as follows. Component of the SKA complex, a microtubule plus end-binding complex of the outer kinetochore that stabilizes spindle microtubule-kinetochore attachments, promotes alignment of chromosomes at the mitotic spindle equator (chromosome congression) and assists suppression of the spindle assembly checkpoint. Kinetochores, consisting of a centromere-associated inner segment and a microtubule-contacting outer segment, play a crucial role in chromosome segregation by mediating the physical connection between centromeric DNA and spindle microtubules. The outer kinetochore is made up of the ten-subunit KMN network complex, comprising the MIS12, NDC80 and KNL1 complexes, and auxiliary microtubule-associated components such as the SKA complex; together they connect the outer kinetochore with the inner kinetochore, bind microtubules, and mediate interactions with mitotic checkpoint proteins that delay anaphase until chromosomes are bioriented on the spindle. The SKA complex is loaded onto bioriented kinetochores and it facilitates chromosome congression by stabilizing microtubules and end-on attachment of the NDC80 complex to depolymerizing spindle microtubules, thereby assisting the poleward-moving kinetochore in withstanding microtubule pulling forces. The complex associates with dynamic microtubule plus-ends and can track both depolymerizing and elongating microtubules. The complex recruits protein phosphatase 1 (PP1) to the kinetochore in prometaphase and metaphase, to oppose spindle assembly checkpoint signaling and promote the onset of anaphase. In the complex, it mediates interactions with microtubules. During meiosis the SKA complex stabilizes the meiotic spindle and is required for its migration to the cortex. This Caenorhabditis briggsae protein is SKA complex subunit 1.